A 393-amino-acid chain; its full sequence is uncharacterized protein (393 aa).

The 265-residue stretch at 2–266 (AMIGLVGKPN…AEKAGIIKRK (265 aa)) folds into the OBG-type G domain. GTP contacts are provided by residues 8–15 (GKPNVGKS) and 78–82 (DVAGL). Residues 314–390 (DMIVVYPVED…KHNDIIKIVS (77 aa)) form the TGS domain.

Belongs to the TRAFAC class OBG-HflX-like GTPase superfamily. OBG GTPase family.

This is an uncharacterized protein from Methanocaldococcus jannaschii (strain ATCC 43067 / DSM 2661 / JAL-1 / JCM 10045 / NBRC 100440) (Methanococcus jannaschii).